The primary structure comprises 200 residues: Recombination protein RecR (200 aa).

Residues C58 to C73 form a C4-type zinc finger. One can recognise a Toprim domain in the interval S81–P176.

This sequence belongs to the RecR family.

May play a role in DNA repair. It seems to be involved in an RecBC-independent recombinational process of DNA repair. It may act with RecF and RecO. This is Recombination protein RecR from Rickettsia bellii (strain OSU 85-389).